The following is a 642-amino-acid chain: Zinc finger protein 398 (642 aa).

Disordered stretches follow at residues 1–24 and 198–225; these read MAEA…QPLP and EGEH…PGIS. Positions 143-214 constitute a KRAB domain; sequence VAFDDVSIYF…DQAGPEESEI (72 aa). Residues 207 to 220 show a composition bias toward acidic residues; it reads AGPEESEIPTDPSE. A Glycyl lysine isopeptide (Lys-Gly) (interchain with G-Cter in SUMO2) cross-link involves residue Lys-265. The C2H2-type 1; atypical zinc finger occupies 343 to 364; that stretch reads FSCHHCGKNLSQDMLLTHQCSH. The C2H2-type 2; degenerate zinc finger occupies 370 to 392; sequence LPCAQCPKHFTPQADLSSTSQDH. 7 consecutive C2H2-type zinc fingers follow at residues 398-420, 427-449, 455-477, 483-505, 511-533, 539-561, and 567-590; these read PTCP…LRVH, FPCP…RRAH, FRCA…QRGH, FSCP…QMIH, YPCT…RRLH, FSCP…QRIH, and YPCS…RSGH. The disordered stretch occupies residues 587–615; sequence RSGHNGGCGGDSDPSGQPPNPPGPLITGL.

The protein belongs to the krueppel C2H2-type zinc-finger protein family.

It localises to the nucleus. In terms of biological role, functions as a transcriptional activator. The chain is Zinc finger protein 398 (ZNF398) from Homo sapiens (Human).